A 211-amino-acid polypeptide reads, in one-letter code: Cytochrome c biogenesis ATP-binding export protein CcmA (211 aa).

The region spanning 1–211 (MAIHNLACVR…RMAEATSCFG (211 aa)) is the ABC transporter domain. 33–40 (GSNGAGKT) is a binding site for ATP.

Belongs to the ABC transporter superfamily. CcmA exporter (TC 3.A.1.107) family. The complex is composed of two ATP-binding proteins (CcmA) and two transmembrane proteins (CcmB).

The protein resides in the cell inner membrane. It carries out the reaction heme b(in) + ATP + H2O = heme b(out) + ADP + phosphate + H(+). In terms of biological role, part of the ABC transporter complex CcmAB involved in the biogenesis of c-type cytochromes; once thought to export heme, this seems not to be the case, but its exact role is uncertain. Responsible for energy coupling to the transport system. This is Cytochrome c biogenesis ATP-binding export protein CcmA from Sodalis glossinidius (strain morsitans).